Here is a 562-residue protein sequence, read N- to C-terminus: UPF0649 protein C1442.02 (562 aa).

A phosphoserine mark is found at serine 285 and serine 286. Residues 288–308 form a disordered region; that stretch reads DEEIAKNADVPAEVDNNSTKA.

This sequence belongs to the UPF0649 family.

Its subcellular location is the cytoplasm. The protein resides in the nucleus. The protein is UPF0649 protein C1442.02 of Schizosaccharomyces pombe (strain 972 / ATCC 24843) (Fission yeast).